The sequence spans 315 residues: Aspartate carbamoyltransferase catalytic subunit (315 aa).

2 residues coordinate carbamoyl phosphate: Arg-65 and Thr-66. Position 93 (Lys-93) interacts with L-aspartate. Carbamoyl phosphate contacts are provided by Arg-115, His-145, and Gln-148. Residues Arg-179 and Arg-234 each contribute to the L-aspartate site. 2 residues coordinate carbamoyl phosphate: Gly-275 and Pro-276.

The protein belongs to the aspartate/ornithine carbamoyltransferase superfamily. ATCase family. As to quaternary structure, heterododecamer (2C3:3R2) of six catalytic PyrB chains organized as two trimers (C3), and six regulatory PyrI chains organized as three dimers (R2).

The catalysed reaction is carbamoyl phosphate + L-aspartate = N-carbamoyl-L-aspartate + phosphate + H(+). Its pathway is pyrimidine metabolism; UMP biosynthesis via de novo pathway; (S)-dihydroorotate from bicarbonate: step 2/3. In terms of biological role, catalyzes the condensation of carbamoyl phosphate and aspartate to form carbamoyl aspartate and inorganic phosphate, the committed step in the de novo pyrimidine nucleotide biosynthesis pathway. The sequence is that of Aspartate carbamoyltransferase catalytic subunit from Xanthomonas euvesicatoria pv. vesicatoria (strain 85-10) (Xanthomonas campestris pv. vesicatoria).